The chain runs to 126 residues: Small ribosomal subunit protein uS12 (126 aa).

A disordered region spans residues 1–28 (MPTINQLVRKGRRKVRTKSKSPALDGNP). The segment covering 9 to 19 (RKGRRKVRTKS) has biased composition (basic residues). Aspartate 89 carries the 3-methylthioaspartic acid modification. The interval 106–126 (GVEKRRRSRSKYGVKRPKAAK) is disordered. Basic residues predominate over residues 109-126 (KRRRSRSKYGVKRPKAAK).

The protein belongs to the universal ribosomal protein uS12 family. In terms of assembly, part of the 30S ribosomal subunit. Contacts proteins S8 and S17. May interact with IF1 in the 30S initiation complex.

Its function is as follows. With S4 and S5 plays an important role in translational accuracy. Interacts with and stabilizes bases of the 16S rRNA that are involved in tRNA selection in the A site and with the mRNA backbone. Located at the interface of the 30S and 50S subunits, it traverses the body of the 30S subunit contacting proteins on the other side and probably holding the rRNA structure together. The combined cluster of proteins S8, S12 and S17 appears to hold together the shoulder and platform of the 30S subunit. In Opitutus terrae (strain DSM 11246 / JCM 15787 / PB90-1), this protein is Small ribosomal subunit protein uS12.